The primary structure comprises 284 residues: MLYSRESRTTVLFLALVTSLTVLCHSVDVTTVFTTSTITEITTVTAAPQPQNKAETALNTATNIIQTMQFLFNCAPFKWKGPLKITSCALNFIVLLLTAWGYLLKYLQENKLNSDADMEKMVGLGFGEMVGRIFGKGVGKAFTKMDITQKLVYPFEGSNRQKCLLMTVGENSIVPFHDLSTEICFDQYTLDSLSHHNHGSISILDAGSVSALGFADISSKMPSVSELYTLFGDYTIEVLGGITKLASTLNREDWQGERNGFAVLSRDRPNQTLLSVHMYSSSLL.

Positions 1–24 are cleaved as a signal peptide; sequence MLYSRESRTTVLFLALVTSLTVLC. Over 25–84 the chain is Cytoplasmic; that stretch reads HSVDVTTVFTTSTITEITTVTAAPQPQNKAETALNTATNIIQTMQFLFNCAPFKWKGPLK. The helical transmembrane segment at 85–104 threads the bilayer; that stretch reads ITSCALNFIVLLLTAWGYLL. Over 105–284 the chain is Extracellular; that stretch reads KYLQENKLNS…SVHMYSSSLL (180 aa). Asparagine 270 carries N-linked (GlcNAc...) asparagine glycosylation.

The protein to yeast YNL033w.

The protein localises to the cell membrane. This is an uncharacterized protein from Saccharomyces cerevisiae (strain ATCC 204508 / S288c) (Baker's yeast).